The sequence spans 158 residues: Large ribosomal subunit protein uL13 (158 aa).

Belongs to the universal ribosomal protein uL13 family. In terms of assembly, part of the 50S ribosomal subunit.

Its function is as follows. This protein is one of the early assembly proteins of the 50S ribosomal subunit, although it is not seen to bind rRNA by itself. It is important during the early stages of 50S assembly. The polypeptide is Large ribosomal subunit protein uL13 (Rickettsia canadensis (strain McKiel)).